Reading from the N-terminus, the 431-residue chain is 3-phosphoshikimate 1-carboxyvinyltransferase (431 aa).

3-phosphoshikimate contacts are provided by lysine 20, serine 21, and arginine 25. Lysine 20 is a phosphoenolpyruvate binding site. The phosphoenolpyruvate site is built by glycine 91 and arginine 119. Residues serine 164, glutamine 166, aspartate 317, and lysine 344 each contribute to the 3-phosphoshikimate site. Glutamine 166 serves as a coordination point for phosphoenolpyruvate. Aspartate 317 functions as the Proton acceptor in the catalytic mechanism. Residues arginine 348 and arginine 390 each contribute to the phosphoenolpyruvate site.

This sequence belongs to the EPSP synthase family. As to quaternary structure, monomer.

Its subcellular location is the cytoplasm. It carries out the reaction 3-phosphoshikimate + phosphoenolpyruvate = 5-O-(1-carboxyvinyl)-3-phosphoshikimate + phosphate. It functions in the pathway metabolic intermediate biosynthesis; chorismate biosynthesis; chorismate from D-erythrose 4-phosphate and phosphoenolpyruvate: step 6/7. Catalyzes the transfer of the enolpyruvyl moiety of phosphoenolpyruvate (PEP) to the 5-hydroxyl of shikimate-3-phosphate (S3P) to produce enolpyruvyl shikimate-3-phosphate and inorganic phosphate. The sequence is that of 3-phosphoshikimate 1-carboxyvinyltransferase from Aquifex aeolicus (strain VF5).